The primary structure comprises 443 residues: Chromosome partition protein MukF (443 aa).

The segment at 209–237 (LDETSGNLRELQDTLNAAGDKLQAQLLRI) is leucine-zipper.

The protein belongs to the MukF family. In terms of assembly, interacts, and probably forms a ternary complex, with MukE and MukB via its C-terminal region. The complex formation is stimulated by calcium or magnesium. It is required for an interaction between MukE and MukB.

Its subcellular location is the cytoplasm. The protein localises to the nucleoid. Its function is as follows. Involved in chromosome condensation, segregation and cell cycle progression. May participate in facilitating chromosome segregation by condensation DNA from both sides of a centrally located replisome during cell division. Not required for mini-F plasmid partitioning. Probably acts via its interaction with MukB and MukE. Overexpression results in anucleate cells. It has a calcium binding activity. This is Chromosome partition protein MukF from Actinobacillus pleuropneumoniae serotype 3 (strain JL03).